The chain runs to 360 residues: Transcription factor MYB39 (360 aa).

2 consecutive HTH myb-type domains span residues 10–62 (DKGV…MNYL) and 63–117 (RPDI…RKKL). 2 DNA-binding regions (H-T-H motif) span residues 38–62 (WRSLPKLAGLNRCGKSCRLRWMNYL) and 90–113 (WSKIAGHLPGRTDNEIKNYWNTHM). The segment at 299-324 (PSTGSVSVSPETTSLNHPSTAQHSSG) is disordered.

The protein localises to the nucleus. This Arabidopsis thaliana (Mouse-ear cress) protein is Transcription factor MYB39 (MYB39).